The primary structure comprises 530 residues: Feruloyl esterase C (530 aa).

The signal sequence occupies residues 1 to 25; that stretch reads MMLTSAILLLTLGVQLSHADDSSRE. Cystine bridges form between cysteine 31/cysteine 78, cysteine 66/cysteine 117, cysteine 190/cysteine 444, cysteine 259/cysteine 276, cysteine 285/cysteine 294, and cysteine 506/cysteine 528. Serine 191 serves as the catalytic Acyl-ester intermediate. Positions 260, 263, 265, 267, and 269 each coordinate Ca(2+). Catalysis depends on charge relay system residues aspartate 403 and histidine 443.

The protein belongs to the tannase family.

The protein localises to the secreted. It carries out the reaction feruloyl-polysaccharide + H2O = ferulate + polysaccharide.. In terms of biological role, involved in degradation of plant cell walls. Hydrolyzes the feruloyl-arabinose ester bond in arabinoxylans as well as the feruloyl-galactose and feruloyl-arabinose ester bonds in pectin. Active against methyl esters of sinapate (MSA) and caffeate (MCA). The sequence is that of Feruloyl esterase C (faeC) from Talaromyces stipitatus (strain ATCC 10500 / CBS 375.48 / QM 6759 / NRRL 1006) (Penicillium stipitatum).